The following is a 528-amino-acid chain: Cytochrome P450 monooxygenase lenC (528 aa).

A helical membrane pass occupies residues 5–27; the sequence is FVLPHPASMGASCILGLLLLTIL. A heme-binding site is contributed by Cys-469.

The protein belongs to the cytochrome P450 family. Heme is required as a cofactor.

The protein localises to the membrane. Its pathway is alkaloid biosynthesis. In terms of biological role, nonribosomal peptide synthetase; part of the gene cluster that mediates the biosynthesis of the ergot alkaloids lentopeptins A and B. Within the pathway, lenC catalyzes the post-NRPS oxidative modification steps using as substrate the N-acyldiketopiperazine intermediate produced by the NRPS lenA. Lentopeptin A forms via a stereospecific hydroxylation, followed by a spontaneous bicyclic lactam core formation, while lentopeptin B is produced through an initial dehydrogenation, followed by a bicyclic lactam core formation and stereospecific hydration. The phenylalanine ammonia-lyase lenB provides the cinnamic acid starter unit to the NRPS lenA for the synthesis of the N-acyldiketopiperazine intermediate which in turn is converted into lentopeptins A and B by lenC. This chain is Cytochrome P450 monooxygenase lenC, found in Aspergillus lentulus.